A 361-amino-acid chain; its full sequence is 3-dehydroquinate synthase (361 aa).

Residues 72 to 77, 130 to 131, Lys-142, and Lys-151 contribute to the NAD(+) site; these read SGEKEK and TT. 3 residues coordinate Zn(2+): Glu-184, His-247, and His-264.

It belongs to the sugar phosphate cyclases superfamily. Dehydroquinate synthase family. Requires Co(2+) as cofactor. Zn(2+) is required as a cofactor. NAD(+) serves as cofactor.

It is found in the cytoplasm. The catalysed reaction is 7-phospho-2-dehydro-3-deoxy-D-arabino-heptonate = 3-dehydroquinate + phosphate. The protein operates within metabolic intermediate biosynthesis; chorismate biosynthesis; chorismate from D-erythrose 4-phosphate and phosphoenolpyruvate: step 2/7. Functionally, catalyzes the conversion of 3-deoxy-D-arabino-heptulosonate 7-phosphate (DAHP) to dehydroquinate (DHQ). The sequence is that of 3-dehydroquinate synthase from Bacillus mycoides (strain KBAB4) (Bacillus weihenstephanensis).